The primary structure comprises 284 residues: Formamidopyrimidine-DNA glycosylase (284 aa).

Residue Pro-2 is the Schiff-base intermediate with DNA of the active site. Glu-3 serves as the catalytic Proton donor. Lys-58 functions as the Proton donor; for beta-elimination activity in the catalytic mechanism. The DNA site is built by His-101, Arg-120, and Arg-163. The FPG-type zinc finger occupies 248 to 284 (RVYDRENAPCVTAGCPDVVRRVVQSGRSSFYCPSCQR). Arg-274 functions as the Proton donor; for delta-elimination activity in the catalytic mechanism.

It belongs to the FPG family. As to quaternary structure, monomer. It depends on Zn(2+) as a cofactor.

It catalyses the reaction Hydrolysis of DNA containing ring-opened 7-methylguanine residues, releasing 2,6-diamino-4-hydroxy-5-(N-methyl)formamidopyrimidine.. The enzyme catalyses 2'-deoxyribonucleotide-(2'-deoxyribose 5'-phosphate)-2'-deoxyribonucleotide-DNA = a 3'-end 2'-deoxyribonucleotide-(2,3-dehydro-2,3-deoxyribose 5'-phosphate)-DNA + a 5'-end 5'-phospho-2'-deoxyribonucleoside-DNA + H(+). In terms of biological role, involved in base excision repair of DNA damaged by oxidation or by mutagenic agents. Acts as a DNA glycosylase that recognizes and removes damaged bases. Has a preference for oxidized purines, such as 7,8-dihydro-8-oxoguanine (8-oxoG). Has AP (apurinic/apyrimidinic) lyase activity and introduces nicks in the DNA strand. Cleaves the DNA backbone by beta-delta elimination to generate a single-strand break at the site of the removed base with both 3'- and 5'-phosphates. The chain is Formamidopyrimidine-DNA glycosylase from Dinoroseobacter shibae (strain DSM 16493 / NCIMB 14021 / DFL 12).